The chain runs to 388 residues: Acetate kinase (388 aa).

A Mg(2+)-binding site is contributed by N8. Position 15 (K15) interacts with ATP. R88 provides a ligand contact to substrate. The active-site Proton donor/acceptor is the D144. Residues H202–G206, D276–R278, and G321–N325 each bind ATP. Position 375 (E375) interacts with Mg(2+).

This sequence belongs to the acetokinase family. In terms of assembly, homodimer. The cofactor is Mg(2+). Mn(2+) serves as cofactor.

It is found in the cytoplasm. It catalyses the reaction acetate + ATP = acetyl phosphate + ADP. It participates in metabolic intermediate biosynthesis; acetyl-CoA biosynthesis; acetyl-CoA from acetate: step 1/2. Catalyzes the formation of acetyl phosphate from acetate and ATP. Can also catalyze the reverse reaction. This is Acetate kinase from Mycoplasmoides gallisepticum (strain R(low / passage 15 / clone 2)) (Mycoplasma gallisepticum).